The following is a 520-amino-acid chain: Cyclic AMP-responsive element-binding protein 3-like protein 2 (520 aa).

Over 1–378 the chain is Cytoplasmic; it reads MEVLESGEQG…CKLAGTQTGT (378 aa). Ser-93 carries the post-translational modification Phosphoserine. Lys-178 participates in a covalent cross-link: Glycyl lysine isopeptide (Lys-Gly) (interchain with G-Cter in SUMO2). Phosphoserine is present on Ser-191. The interval 195–264 is disordered; the sequence is APVDHLHLPP…PHKLQGSGPL (70 aa). Low complexity-rich tracts occupy residues 208-220 and 234-255; these read SSHG…SLSP and SPSR…LTAP. Positions 294 to 357 constitute a bZIP domain; sequence ALKKIRRKIK…RTLLQQLQKL (64 aa). The tract at residues 296-325 is basic motif; sequence KKIRRKIKNKISAQESRRKKKEYMDSLEKK. Positions 336–357 are leucine-zipper; the sequence is LRKKVEVLENTNRTLLQQLQKL. Residues 379-399 traverse the membrane as a helical; Signal-anchor for type II membrane protein segment; sequence CLMVVVLCFAVAFGSFFQGYG. Residues 400 to 520 lie on the Lumenal side of the membrane; the sequence is PYPSATKMAL…ELDRRVNTTF (121 aa). An S1P recognition motif is present at residues 427–430; sequence RNLL. N-linked (GlcNAc...) asparagine glycosylation is found at Asn-480, Asn-504, and Asn-517.

The protein belongs to the bZIP family. ATF subfamily. In terms of assembly, binds DNA as a dimer. Upon ER stress, translocated to the Golgi apparatus, where it is processed by regulated intramembrane proteolysis (RIP) to release the cytosol-facing N-terminal transcription factor domain. The cleavage is performed sequentially by site-1 and site-2 proteases (S1P/MBTPS1 and S2P/MBTPS2). In terms of processing, N-glycosylated. Post-translationally, ubiquitinated by HRD1/SYVN1; undergoes 'Lys-48'-linked ubiquitination, followed by rapid proteasomal degradation under normal conditions. Upon ER stress, SYVN1 E3 ubiquitin-protein ligase dissociates from its substrate, ubiquitination does not occur and CREB3L2 is stabilized.

The protein resides in the endoplasmic reticulum membrane. It is found in the nucleus. In terms of biological role, transcription factor involved in unfolded protein response (UPR). In the absence of endoplasmic reticulum (ER) stress, inserted into ER membranes, with N-terminal DNA-binding and transcription activation domains oriented toward the cytosolic face of the membrane. In response to ER stress, transported to the Golgi, where it is cleaved in a site-specific manner by resident proteases S1P/MBTPS1 and S2P/MBTPS2. The released N-terminal cytosolic domain is translocated to the nucleus to effect transcription of specific target genes. Plays a critical role in chondrogenesis by activating the transcription of SEC23A, which promotes the transport and secretion of cartilage matrix proteins, and possibly that of ER biogenesis-related genes. In a neuroblastoma cell line, protects cells from ER stress-induced death. In vitro activates transcription of target genes via direct binding to the CRE site. The chain is Cyclic AMP-responsive element-binding protein 3-like protein 2 (CREB3L2) from Pongo abelii (Sumatran orangutan).